Consider the following 117-residue polypeptide: Neurotoxic enhancer CSTX-13 (117 aa).

The N-terminal stretch at 1-20 is a signal peptide; the sequence is MKVLVIFAVLSLVIFSNCSA. A propeptide spanning residues 21–47 is cleaved from the precursor; sequence ETDEDFFGEESFEADDIIPFIAKEQVR. Disulfide bonds link Cys-50–Cys-65, Cys-57–Cys-74, Cys-64–Cys-95, and Cys-76–Cys-93. A propeptide spanning residues 82–87 is cleaved from the precursor; sequence RSETAR. Thr-116 is subject to Threonine amide.

It belongs to the neurotoxin 19 (CSTX) family. 12 subfamily. In terms of assembly, heterodimer of A and B chains; disulfide-linked. Interacts with CSTX-1 (AC P81694) (Kd=430 nM), and with CSTX-9 (AC P58604) (Kd=370 nM). Expressed by the venom gland.

The protein resides in the secreted. The protein localises to the target cell membrane. Functionally, synergistic toxin that induces or increases a cytolytic effect when combined with CSTX-1 (AC P81694) or CSTX-9 (AC P58604). When alone, has a weak insecticidal activity, with an unknown molecular target. The protein is Neurotoxic enhancer CSTX-13 of Cupiennius salei (American wandering spider).